The sequence spans 252 residues: Triosephosphate isomerase (252 aa).

Position 10–12 (10–12 (NWK)) interacts with substrate. The active-site Electrophile is His96. Catalysis depends on Glu168, which acts as the Proton acceptor. Residues Gly174, Ser214, and 235 to 236 (GG) each bind substrate.

Belongs to the triosephosphate isomerase family. In terms of assembly, homodimer.

The protein resides in the cytoplasm. The enzyme catalyses D-glyceraldehyde 3-phosphate = dihydroxyacetone phosphate. The protein operates within carbohydrate biosynthesis; gluconeogenesis. Its pathway is carbohydrate degradation; glycolysis; D-glyceraldehyde 3-phosphate from glycerone phosphate: step 1/1. In terms of biological role, involved in the gluconeogenesis. Catalyzes stereospecifically the conversion of dihydroxyacetone phosphate (DHAP) to D-glyceraldehyde-3-phosphate (G3P). The protein is Triosephosphate isomerase of Lactobacillus helveticus (strain DPC 4571).